Here is an 89-residue protein sequence, read N- to C-terminus: Small ribosomal subunit protein uS15 (89 aa).

The protein belongs to the universal ribosomal protein uS15 family. As to quaternary structure, part of the 30S ribosomal subunit. Forms a bridge to the 50S subunit in the 70S ribosome, contacting the 23S rRNA.

Functionally, one of the primary rRNA binding proteins, it binds directly to 16S rRNA where it helps nucleate assembly of the platform of the 30S subunit by binding and bridging several RNA helices of the 16S rRNA. Forms an intersubunit bridge (bridge B4) with the 23S rRNA of the 50S subunit in the ribosome. The polypeptide is Small ribosomal subunit protein uS15 (Herminiimonas arsenicoxydans).